We begin with the raw amino-acid sequence, 233 residues long: Large ribosomal subunit protein uL1 (233 aa).

The protein belongs to the universal ribosomal protein uL1 family. As to quaternary structure, part of the 50S ribosomal subunit.

In terms of biological role, binds directly to 23S rRNA. The L1 stalk is quite mobile in the ribosome, and is involved in E site tRNA release. Its function is as follows. Protein L1 is also a translational repressor protein, it controls the translation of the L11 operon by binding to its mRNA. The sequence is that of Large ribosomal subunit protein uL1 from Shewanella woodyi (strain ATCC 51908 / MS32).